The following is a 249-amino-acid chain: MHTKDQIFAAPIARLGDFCFDEQVVDVFPDMIQRSVPGYSNIISAIGMMAARYAQPQSRLYDLGCSLGAATQAMRRHVTQPGCHITAVDLSHPMIERARAHLSGFKSEVPVELVEADICDIAIENASVVVLNFTLQFVEPEKRAALIQRIFDGLRPGGILILSEKFRFEDAPVNELLIDLHLDFKRANGYSELEISQKRTALENVMRTDSLPVHQARLRDAGFAHQDLWFQCFNFGSMIAIKSSEPAQP.

S-adenosyl-L-methionine is bound by residues tyrosine 39, 64-66 (GCS), 117-118 (DI), asparagine 132, and arginine 199.

The protein belongs to the class I-like SAM-binding methyltransferase superfamily. Cx-SAM synthase family. Homodimer.

The catalysed reaction is prephenate + S-adenosyl-L-methionine = carboxy-S-adenosyl-L-methionine + 3-phenylpyruvate + H2O. Its function is as follows. Catalyzes the conversion of S-adenosyl-L-methionine (SAM) to carboxy-S-adenosyl-L-methionine (Cx-SAM). The protein is Carboxy-S-adenosyl-L-methionine synthase of Aeromonas hydrophila subsp. hydrophila (strain ATCC 7966 / DSM 30187 / BCRC 13018 / CCUG 14551 / JCM 1027 / KCTC 2358 / NCIMB 9240 / NCTC 8049).